A 263-amino-acid chain; its full sequence is MRSSSDPASIHVVIPARFGSTRLPGKPLIDLAGEPMIVRVYEAVRAALPETVNIVVATDDERIVGSLEAYRIPVRMTDPEHQSGTDRCAQVARELGWNSDDLVVNVQGDEPLVPQPLLASFVQFCANAQAFDMATVAVPLTEVSHLTDPNVVKLVVGAQGQAIVFSRSAIPFCRDLPQNEWPLSAYLRHVGIYAYRCSALYRLTETPSCELEELERLEQMRAIWLGMPIRVFEWPEPPPPGVDTKEDVARVREILFVNASGRS.

The protein belongs to the KdsB family.

Its subcellular location is the cytoplasm. The enzyme catalyses 3-deoxy-alpha-D-manno-oct-2-ulosonate + CTP = CMP-3-deoxy-beta-D-manno-octulosonate + diphosphate. The protein operates within nucleotide-sugar biosynthesis; CMP-3-deoxy-D-manno-octulosonate biosynthesis; CMP-3-deoxy-D-manno-octulosonate from 3-deoxy-D-manno-octulosonate and CTP: step 1/1. It participates in bacterial outer membrane biogenesis; lipopolysaccharide biosynthesis. Activates KDO (a required 8-carbon sugar) for incorporation into bacterial lipopolysaccharide in Gram-negative bacteria. The polypeptide is 3-deoxy-manno-octulosonate cytidylyltransferase 2 (Paraburkholderia phytofirmans (strain DSM 17436 / LMG 22146 / PsJN) (Burkholderia phytofirmans)).